The following is a 177-amino-acid chain: MTLWVDADSCPARVRVLVARAAARLGCVARFVANRPIPLVQSPHCIMVETQPVDQAADRHIIAYARAGDLVVTRDIVLAKAIVDARISVINDRGDVYTEENIRERLSVRNFMYDLRGQGLAPETTSPFGRRDAARFADSLDRETAKLLRLARRREAKTGEEQCDWPSAQGKSQTGRR.

A disordered region spans residues Glu155 to Arg177.

The protein belongs to the UPF0178 family.

This Treponema pallidum (strain Nichols) protein is UPF0178 protein TP_0845.